The following is an 876-amino-acid chain: Leucine--tRNA ligase (876 aa).

Residues 43–53 (PYPSGRIHMGH) carry the 'HIGH' region motif. A 'KMSKS' region motif is present at residues 632–636 (KMSKS). Lys635 serves as a coordination point for ATP.

The protein belongs to the class-I aminoacyl-tRNA synthetase family.

The protein localises to the cytoplasm. It carries out the reaction tRNA(Leu) + L-leucine + ATP = L-leucyl-tRNA(Leu) + AMP + diphosphate. The chain is Leucine--tRNA ligase from Sinorhizobium fredii (strain NBRC 101917 / NGR234).